Here is an 805-residue protein sequence, read N- to C-terminus: MTDRTQRELGWPEILNALAARCRLPAGRNRALALPFQPTAEAAREALALVGEARRLSELALALPLGGVGDVEGHLERASKGGVLEPLALRECAALARAAARTRGLLEARASETPRLWALAEPLSPSAALADRIERAIEPSGAISDRASAELAQARERSRGLHRALKAQVETLLADADMQRHLRDTYFTIRNERYVLPVLASARRAVPGIVHNASQSGQTLFVEPDSMVELGNELSIANAVAAEEEQRILRELTGALMADSGALARDLGILAALDVLEGSALLASDLDAHAPEVLSPFDGLRVGGAGAGFELLSLRHPLLVLQGKKVVPSHVRLDAPARALIVSGPNGGGKTVAITAVGLSALMLRAGLPVAAAEGSRLPFFLEVKAAVDERGDLAKDLSTFTAHLAAVKEMLAGAVPGSLILVDEIAADTDPREGAALAAAILESLVERGAAVLVTTHLDELKALALTDPRYANARVGFDAERLAPTYQLHLGSPGSSSAIEVAARVGLPAPLVERARAALTGHGGALGQALRALDDERARLAEERRAAESARDAARKAEERARAAEEVARRAQREAAARMGEALADELEAARAEVAELLAGLQARPTVKAATDAARQLDAWRATVAQAAKATQARADAGAEALPGGEVRPGVRVRIVSLGQEGEVVEVDGKDALVRAGPLKVRRPVADLVPLLGKAKDAAKLGRSRSEKLQAASEARPSAPPGLERRLDVRGLRVEELLREVERFLDRLYSDGEADCLILHGHGTGALKQALRDHLSASPYVGAFRAGDRHEGGDAVTVVSLRR.

An ATP-binding site is contributed by 344-351 (GPNGGGKT). A disordered region spans residues 705–724 (RSRSEKLQAASEARPSAPPG). Positions 729-804 (LDVRGLRVEE…GDAVTVVSLR (76 aa)) constitute a Smr domain.

This sequence belongs to the DNA mismatch repair MutS family. MutS2 subfamily. In terms of assembly, homodimer. Binds to stalled ribosomes, contacting rRNA.

Functionally, endonuclease that is involved in the suppression of homologous recombination and thus may have a key role in the control of bacterial genetic diversity. Acts as a ribosome collision sensor, splitting the ribosome into its 2 subunits. Detects stalled/collided 70S ribosomes which it binds and splits by an ATP-hydrolysis driven conformational change. Acts upstream of the ribosome quality control system (RQC), a ribosome-associated complex that mediates the extraction of incompletely synthesized nascent chains from stalled ribosomes and their subsequent degradation. Probably generates substrates for RQC. In Anaeromyxobacter sp. (strain Fw109-5), this protein is Endonuclease MutS2.